Here is a 70-residue protein sequence, read N- to C-terminus: MTTTVKCPTCQKEVIWNSESKFKPFCSDRCKLIDLGDWASEKHAIPVKSEFDPETLDGLGYDEADFFKDQ.

Residues C7, C10, C26, and C30 each coordinate Zn(2+).

The protein belongs to the DNA gyrase inhibitor YacG family. As to quaternary structure, interacts with GyrB. Zn(2+) is required as a cofactor.

Inhibits all the catalytic activities of DNA gyrase by preventing its interaction with DNA. Acts by binding directly to the C-terminal domain of GyrB, which probably disrupts DNA binding by the gyrase. This Shewanella sediminis (strain HAW-EB3) protein is DNA gyrase inhibitor YacG.